A 631-amino-acid polypeptide reads, in one-letter code: Chaperone protein HtpG (631 aa).

The segment at 1 to 339 is a; substrate-binding; that stretch reads MSTNQETRGF…SNDLPLNVSR (339 aa). Residues 340–555 form a b region; it reads EILQDNKVTS…DDQMTTQMAK (216 aa). Positions 556–631 are c; the sequence is LFAAAGQAMP…NTLLSKLTSH (76 aa).

It belongs to the heat shock protein 90 family. In terms of assembly, homodimer.

The protein localises to the cytoplasm. Molecular chaperone. Has ATPase activity. This chain is Chaperone protein HtpG, found in Pasteurella multocida (strain Pm70).